A 27-amino-acid polypeptide reads, in one-letter code: Toxin TdII-4 (27 aa).

The 27-residue stretch at 1 to 27 (KDGYLMEPNGCKLGCLTRPAKYCWXEE) folds into the LCN-type CS-alpha/beta domain.

It belongs to the long (4 C-C) scorpion toxin superfamily. Sodium channel inhibitor family. Beta subfamily. In terms of tissue distribution, expressed by the venom gland.

It localises to the secreted. Beta toxins bind voltage-independently at site-4 of sodium channels (Nav) and shift the voltage of activation toward more negative potentials thereby affecting sodium channel activation and promoting spontaneous and repetitive firing. This toxin is active against mammals and also affects neuromuscular preparations of frog. This chain is Toxin TdII-4, found in Tityus discrepans (Venezuelan scorpion).